The following is a 537-amino-acid chain: Phenylalanine--tRNA ligase beta subunit (537 aa).

The B5 domain occupies 268-343; the sequence is FNFRPYRLNL…KSYGIENVRE (76 aa). Residues D321, D327, E330, and D331 each contribute to the Mg(2+) site.

This sequence belongs to the phenylalanyl-tRNA synthetase beta subunit family. Type 2 subfamily. Tetramer of two alpha and two beta subunits. It depends on Mg(2+) as a cofactor.

It is found in the cytoplasm. The catalysed reaction is tRNA(Phe) + L-phenylalanine + ATP = L-phenylalanyl-tRNA(Phe) + AMP + diphosphate + H(+). In Thermoplasma volcanium (strain ATCC 51530 / DSM 4299 / JCM 9571 / NBRC 15438 / GSS1), this protein is Phenylalanine--tRNA ligase beta subunit.